We begin with the raw amino-acid sequence, 75 residues long: uncharacterized protein (75 aa).

Residues 12-32 (LKVFILFTGFTALFYYAMIWV) traverse the membrane as a helical segment.

The protein resides in the cell membrane. This is an uncharacterized protein from Bacillus subtilis (strain 168).